Reading from the N-terminus, the 918-residue chain is Chaperone protein ClpC4, chloroplastic (918 aa).

An i region spans residues 266–515; sequence LMEYGTNLTK…RLRNAQCKPS (250 aa). ATP-binding positions include 311–318 and 653–660; these read GEPGVGKT and GPTGVGKS. Positions 579-774 are II; the sequence is VTEDDVRHAI…LIVMTTNIGS (196 aa).

It belongs to the ClpA/ClpB family. ClpC subfamily.

The protein resides in the plastid. It is found in the chloroplast. Functionally, molecular chaperone that may interact with a ClpP-like protease involved in degradation of denatured proteins in the chloroplast. The polypeptide is Chaperone protein ClpC4, chloroplastic (CPLC4) (Oryza sativa subsp. japonica (Rice)).